We begin with the raw amino-acid sequence, 169 residues long: Putative 3-methyladenine DNA glycosylase (169 aa).

This sequence belongs to the DNA glycosylase MPG family.

The polypeptide is Putative 3-methyladenine DNA glycosylase (Wolbachia sp. subsp. Brugia malayi (strain TRS)).